We begin with the raw amino-acid sequence, 280 residues long: Large ribosomal subunit protein uL2 (280 aa).

Disordered stretches follow at residues 1-59 and 223-280; these read MAIR…GGHK and GVVM…NKKR. 2 stretches are compositionally biased toward basic residues: residues 45-59 and 269-280; these read VHGH…GGHK and VRRRRSNKNKKR.

This sequence belongs to the universal ribosomal protein uL2 family. As to quaternary structure, part of the 50S ribosomal subunit. Forms a bridge to the 30S subunit in the 70S ribosome.

Functionally, one of the primary rRNA binding proteins. Required for association of the 30S and 50S subunits to form the 70S ribosome, for tRNA binding and peptide bond formation. It has been suggested to have peptidyltransferase activity; this is somewhat controversial. Makes several contacts with the 16S rRNA in the 70S ribosome. In Corynebacterium jeikeium (strain K411), this protein is Large ribosomal subunit protein uL2.